Consider the following 448-residue polypeptide: Chromosomal replication initiator protein DnaA (448 aa).

A domain I, interacts with DnaA modulators region spans residues 1–85; it reads MHDNLPQIWE…EVHIVVPSEE (85 aa). Residues 85–110 are domain II; that stretch reads ERVGDTQNINARRSNAQSPIMGNSPL. The interval 111-327 is domain III, AAA+ region; the sequence is ILNPKYTFDT…GALIRIVAYS (217 aa). ATP contacts are provided by Gly-155, Gly-157, Lys-158, and Thr-159. The tract at residues 328 to 448 is domain IV, binds dsDNA; it reads SLTNSEVTVE…DAIIKELKSD (121 aa).

It belongs to the DnaA family. In terms of assembly, oligomerizes as a right-handed, spiral filament on DNA at oriC.

It is found in the cytoplasm. In terms of biological role, plays an essential role in the initiation and regulation of chromosomal replication. ATP-DnaA binds to the origin of replication (oriC) to initiate formation of the DNA replication initiation complex once per cell cycle. Binds the DnaA box (a 9 base pair repeat at the origin) and separates the double-stranded (ds)DNA. Forms a right-handed helical filament on oriC DNA; dsDNA binds to the exterior of the filament while single-stranded (ss)DNA is stabiized in the filament's interior. The ATP-DnaA-oriC complex binds and stabilizes one strand of the AT-rich DNA unwinding element (DUE), permitting loading of DNA polymerase. After initiation quickly degrades to an ADP-DnaA complex that is not apt for DNA replication. Binds acidic phospholipids. This is Chromosomal replication initiator protein DnaA from Alkaliphilus metalliredigens (strain QYMF).